We begin with the raw amino-acid sequence, 71 residues long: Small ribosomal subunit protein bS18 (71 aa).

The protein belongs to the bacterial ribosomal protein bS18 family. In terms of assembly, part of the 30S ribosomal subunit. Forms a tight heterodimer with protein bS6.

Its function is as follows. Binds as a heterodimer with protein bS6 to the central domain of the 16S rRNA, where it helps stabilize the platform of the 30S subunit. This is Small ribosomal subunit protein bS18 from Nostoc punctiforme (strain ATCC 29133 / PCC 73102).